A 424-amino-acid polypeptide reads, in one-letter code: UDP-N-acetylglucosamine 1-carboxyvinyltransferase (424 aa).

A phosphoenolpyruvate-binding site is contributed by 22–23; the sequence is KN. Residue Arg-93 coordinates UDP-N-acetyl-alpha-D-glucosamine. The active-site Proton donor is the Cys-117. Cys-117 bears the 2-(S-cysteinyl)pyruvic acid O-phosphothioketal mark. Residues 122-126, Asp-307, and Ile-329 each bind UDP-N-acetyl-alpha-D-glucosamine; that span reads RPVDL.

The protein belongs to the EPSP synthase family. MurA subfamily.

Its subcellular location is the cytoplasm. It catalyses the reaction phosphoenolpyruvate + UDP-N-acetyl-alpha-D-glucosamine = UDP-N-acetyl-3-O-(1-carboxyvinyl)-alpha-D-glucosamine + phosphate. It participates in cell wall biogenesis; peptidoglycan biosynthesis. In terms of biological role, cell wall formation. Adds enolpyruvyl to UDP-N-acetylglucosamine. This Chlorobaculum parvum (strain DSM 263 / NCIMB 8327) (Chlorobium vibrioforme subsp. thiosulfatophilum) protein is UDP-N-acetylglucosamine 1-carboxyvinyltransferase.